The following is a 499-amino-acid chain: MNDFSQPVIDSIHKPRDAANPRERYAAGVMKYREMGYWQPDYAPKDTDVIALFRITPQPGVDPEEAAAAVAGESSTATWTVVWTDRLTACDIYRAKAYRVDPVPASNAAEPQYFAYIAYELDLFEEGSVANLTASIIGNVFGFKPLKALRLEDMRIPVAYLKTFQGPPTGIVVERERLDKYGRPLLGATVKPKLGLSGKNYGRVVYEGLRGGLDFLKDDENINSQAFMHWRDRFLFAMEAVNRAQAETGEVKGHYLNVTAGTMEDMYERAEFAKELGSCIVMIDLVIGWTAIQSMARWARRNDMILHLHRAGHSTYTRQRNHGISFRVIAKWLRMAGVDHAHAGTAVGKLEGDPLSVQGYYNVCRESHNEVDLSRGIFFDQPWAGLRKVMPVASGGIHAGQMHQLLDLFGDDAILQFGGGTIGHPAGIQAGAVANRVALEAMVKARNEGRDIVHEGPDILEAAARWCTPLKQALDTWRDVTFNYASTDTPDFAATPTAA.

Substrate is bound by residues N139 and T189. Catalysis depends on K191, which acts as the Proton acceptor. K193 contributes to the substrate binding site. Mg(2+) contacts are provided by K217, D219, and E220. K217 is subject to N6-carboxylysine. The Proton acceptor role is filled by H309. Residues R310, H342, and S394 each coordinate substrate.

It belongs to the RuBisCO large chain family. Type I subfamily. Heterohexadecamer of 8 large chains and 8 small chains. Mg(2+) is required as a cofactor.

The catalysed reaction is 2 (2R)-3-phosphoglycerate + 2 H(+) = D-ribulose 1,5-bisphosphate + CO2 + H2O. The enzyme catalyses D-ribulose 1,5-bisphosphate + O2 = 2-phosphoglycolate + (2R)-3-phosphoglycerate + 2 H(+). Functionally, ruBisCO catalyzes two reactions: the carboxylation of D-ribulose 1,5-bisphosphate, the primary event in carbon dioxide fixation, as well as the oxidative fragmentation of the pentose substrate. Both reactions occur simultaneously and in competition at the same active site. The polypeptide is Ribulose bisphosphate carboxylase large chain (Paraburkholderia xenovorans (strain LB400)).